The chain runs to 170 residues: Opacity-related protein POPM3 (170 aa).

This sequence belongs to the opacity porin family.

It localises to the cell outer membrane. In Neisseria meningitidis serogroup C, this protein is Opacity-related protein POPM3 (opr).